The chain runs to 256 residues: Thiazole synthase (256 aa).

Lysine 95 acts as the Schiff-base intermediate with DXP in catalysis. Residues glycine 156, 182-183 (AG), and 204-205 (NT) contribute to the 1-deoxy-D-xylulose 5-phosphate site.

The protein belongs to the ThiG family. As to quaternary structure, homotetramer. Forms heterodimers with either ThiH or ThiS.

Its subcellular location is the cytoplasm. It carries out the reaction [ThiS sulfur-carrier protein]-C-terminal-Gly-aminoethanethioate + 2-iminoacetate + 1-deoxy-D-xylulose 5-phosphate = [ThiS sulfur-carrier protein]-C-terminal Gly-Gly + 2-[(2R,5Z)-2-carboxy-4-methylthiazol-5(2H)-ylidene]ethyl phosphate + 2 H2O + H(+). Its pathway is cofactor biosynthesis; thiamine diphosphate biosynthesis. Catalyzes the rearrangement of 1-deoxy-D-xylulose 5-phosphate (DXP) to produce the thiazole phosphate moiety of thiamine. Sulfur is provided by the thiocarboxylate moiety of the carrier protein ThiS. In vitro, sulfur can be provided by H(2)S. The sequence is that of Thiazole synthase from Escherichia coli O17:K52:H18 (strain UMN026 / ExPEC).